A 153-amino-acid chain; its full sequence is MKFCKPKPKSILSLDIGNKRIGLAYCDPLCITSNILPAVKRFKNNQEIKIIRNYINEYNLTGFIVGIPLDERGQMTTQAIDCKNYGQLLSYELRLPFSFVNEHSSTWESSNRFGIKKDKSGLIDSFSAKIILEQWIEEGPELEEIAGKPQIKY.

It belongs to the YqgF nuclease family.

The protein localises to the cytoplasm. Functionally, could be a nuclease involved in processing of the 5'-end of pre-16S rRNA. The polypeptide is Putative pre-16S rRNA nuclease (Prochlorococcus marinus (strain MIT 9215)).